A 1192-amino-acid polypeptide reads, in one-letter code: Probable ATP-dependent RNA helicase kurz (1192 aa).

Residues 170–214 are disordered; sequence ELQAKRKNPNVISVEEDDEDSSSSDEDDEEAPAQSAPIAIPTPVS. The span at 183-200 shows a compositional bias: acidic residues; sequence VEEDDEDSSSSDEDDEEA. Residues 270–436 form the Helicase ATP-binding domain; sequence METINENPIV…TRLFKIPPPL (167 aa). 283–290 lines the ATP pocket; sequence GETGSGKT. The short motif at 379–382 is the DEAH box element; sequence DEAH. The segment at 504-529 is disordered; the sequence is APTKDVAKNGKVSEEEKEETIDDAAS. Residues 505–517 are compositionally biased toward basic and acidic residues; that stretch reads PTKDVAKNGKVSE. S529 carries the post-translational modification Phosphoserine. T530 is subject to Phosphothreonine. A Helicase C-terminal domain is found at 540–746; that stretch reads DMKRVIRNIR…DLMLQMRCMG (207 aa). The segment covering 567-583 has biased composition (basic and acidic residues); sequence DDYKLPGDDTEADMHEQ. Residues 567–612 are disordered; the sequence is DDYKLPGDDTEADMHEQPDEDDEQEGLEEDNDDELGLEDESGMGSG. The span at 584–607 shows a compositional bias: acidic residues; that stretch reads PDEDDEQEGLEEDNDDELGLEDES.

The protein belongs to the DEAD box helicase family. DEAH subfamily.

It carries out the reaction ATP + H2O = ADP + phosphate + H(+). This is Probable ATP-dependent RNA helicase kurz (kz) from Drosophila melanogaster (Fruit fly).